The following is a 417-amino-acid chain: Glutamate-1-semialdehyde 2,1-aminomutase (417 aa).

Position 267 is an N6-(pyridoxal phosphate)lysine (lysine 267).

The protein belongs to the class-III pyridoxal-phosphate-dependent aminotransferase family. HemL subfamily. Homodimer. Pyridoxal 5'-phosphate is required as a cofactor.

It localises to the cytoplasm. It catalyses the reaction (S)-4-amino-5-oxopentanoate = 5-aminolevulinate. It functions in the pathway porphyrin-containing compound metabolism; protoporphyrin-IX biosynthesis; 5-aminolevulinate from L-glutamyl-tRNA(Glu): step 2/2. This chain is Glutamate-1-semialdehyde 2,1-aminomutase, found in Solibacter usitatus (strain Ellin6076).